Here is a 74-residue protein sequence, read N- to C-terminus: Translation initiation factor IF-1 (74 aa).

Residues 1–72 (MAKETEMEFE…TRGRITYRKI (72 aa)) enclose the S1-like domain.

It belongs to the IF-1 family. As to quaternary structure, component of the 30S ribosomal translation pre-initiation complex which assembles on the 30S ribosome in the order IF-2 and IF-3, IF-1 and N-formylmethionyl-tRNA(fMet); mRNA recruitment can occur at any time during PIC assembly.

The protein localises to the cytoplasm. Functionally, one of the essential components for the initiation of protein synthesis. Stabilizes the binding of IF-2 and IF-3 on the 30S subunit to which N-formylmethionyl-tRNA(fMet) subsequently binds. Helps modulate mRNA selection, yielding the 30S pre-initiation complex (PIC). Upon addition of the 50S ribosomal subunit IF-1, IF-2 and IF-3 are released leaving the mature 70S translation initiation complex. This Mycoplasma capricolum subsp. capricolum (strain California kid / ATCC 27343 / NCTC 10154) protein is Translation initiation factor IF-1.